The sequence spans 206 residues: dTTP/UTP pyrophosphatase (206 aa).

The active-site Proton acceptor is the aspartate 79.

It belongs to the Maf family. YhdE subfamily. A divalent metal cation serves as cofactor.

It localises to the cytoplasm. It catalyses the reaction dTTP + H2O = dTMP + diphosphate + H(+). The catalysed reaction is UTP + H2O = UMP + diphosphate + H(+). In terms of biological role, nucleoside triphosphate pyrophosphatase that hydrolyzes dTTP and UTP. May have a dual role in cell division arrest and in preventing the incorporation of modified nucleotides into cellular nucleic acids. This is dTTP/UTP pyrophosphatase from Rhizobium etli (strain ATCC 51251 / DSM 11541 / JCM 21823 / NBRC 15573 / CFN 42).